A 201-amino-acid chain; its full sequence is 3-isopropylmalate dehydratase small subunit (201 aa).

It belongs to the LeuD family. LeuD type 1 subfamily. Heterodimer of LeuC and LeuD.

It carries out the reaction (2R,3S)-3-isopropylmalate = (2S)-2-isopropylmalate. The protein operates within amino-acid biosynthesis; L-leucine biosynthesis; L-leucine from 3-methyl-2-oxobutanoate: step 2/4. Catalyzes the isomerization between 2-isopropylmalate and 3-isopropylmalate, via the formation of 2-isopropylmaleate. The sequence is that of 3-isopropylmalate dehydratase small subunit from Sinorhizobium fredii (strain NBRC 101917 / NGR234).